Here is a 332-residue protein sequence, read N- to C-terminus: HTH-type transcriptional regulator RegA (332 aa).

Residues 1-57 enclose the HTH lacI-type domain; it reads MATSIKDVAREAGVSIATVSRVLNDIDVVNEDTKKKVLDAIKELGYRPNIVARSLKT. The segment at residues 5–24 is a DNA-binding region (H-T-H motif); the sequence is IKDVAREAGVSIATVSRVLN.

Involved in the regulation of amylase production. The chain is HTH-type transcriptional regulator RegA (regA) from Clostridium saccharobutylicum.